The chain runs to 400 residues: CCA-adding enzyme (400 aa).

Residues G8 and R11 each contribute to the ATP site. Residues G8 and R11 each contribute to the CTP site. 2 residues coordinate Mg(2+): D21 and D23. R91, R137, and R140 together coordinate ATP. R91, R137, and R140 together coordinate CTP. The 106-residue stretch at 217-322 folds into the HD domain; sequence NFQYAMTALK…IDLFNKWDVW (106 aa).

The protein belongs to the tRNA nucleotidyltransferase/poly(A) polymerase family. Bacterial CCA-adding enzyme type 2 subfamily. It depends on Mg(2+) as a cofactor.

The catalysed reaction is a tRNA precursor + 2 CTP + ATP = a tRNA with a 3' CCA end + 3 diphosphate. It catalyses the reaction a tRNA with a 3' CCA end + 2 CTP + ATP = a tRNA with a 3' CCACCA end + 3 diphosphate. Functionally, catalyzes the addition and repair of the essential 3'-terminal CCA sequence in tRNAs without using a nucleic acid template. Adds these three nucleotides in the order of C, C, and A to the tRNA nucleotide-73, using CTP and ATP as substrates and producing inorganic pyrophosphate. tRNA 3'-terminal CCA addition is required both for tRNA processing and repair. Also involved in tRNA surveillance by mediating tandem CCA addition to generate a CCACCA at the 3' terminus of unstable tRNAs. While stable tRNAs receive only 3'-terminal CCA, unstable tRNAs are marked with CCACCA and rapidly degraded. The chain is CCA-adding enzyme from Actinobacillus succinogenes (strain ATCC 55618 / DSM 22257 / CCUG 43843 / 130Z).